A 322-amino-acid polypeptide reads, in one-letter code: MSGSAEHLKDEGSKTQSMIAGATAGLIARFVIAPLDVVKIRLQLQSHSASDPLSHRDLRGSLIYKGTLPTIKRIFREEGLSALWKGNVPAELMYVSYSAIQFTTYRSVTLALQDTVGEHRMPAAAESFIAGASAGAVATTATYPLDLLRTRFAAQGVERIYTSLRASIRDIAVNEGPRGFFQGLGAGVGQIIPYMGIFFATYETLRVPLGTLHMPFGSGDATAGVLASVIAKTGIFPFDLIRKRLQVQGPTRERYVHKNIPVYNGVFRTMRHIIQNEGYRGLYRGLTVSLFKAAPASAVTMWTYERVLRLLLKWEKAQESPT.

3 Solcar repeats span residues 12–111, 122–208, and 215–310; these read GSKT…VTLA, PAAA…LRVP, and PFGS…VLRL. 6 helical membrane-spanning segments follow: residues 18-38, 92-108, 128-148, 180-200, 221-241, and 285-302; these read MIAG…LDVV, LMYV…YRSV, FIAG…LDLL, FFQG…IFFA, ATAG…FDLI, and GLTV…VTMW.

Belongs to the mitochondrial carrier (TC 2.A.29) family.

The protein localises to the mitochondrion inner membrane. Its function is as follows. Mitochondrial transporter that mediates uptake of thiamine pyrophosphate (ThPP) into mitochondria. The protein is Mitochondrial thiamine pyrophosphate carrier 1 (tpc1) of Sclerotinia sclerotiorum (strain ATCC 18683 / 1980 / Ss-1) (White mold).